The sequence spans 370 residues: Cytochrome b (370 aa).

Helical transmembrane passes span 25–45, 69–90, 105–125, and 170–190; these read FGSMLLACLTLQLLTGFFLAV, WMMQNLHAIGASMFFICIYIHI, WLSGTTLLIMLMATAFFGYVL, and FFALHFILPFGIISLSSLHIL. Positions 75 and 89 each coordinate heme b. His-174 and His-188 together coordinate heme b. Residue His-193 participates in a ubiquinone binding. A run of 4 helical transmembrane segments spans residues 218–238, 280–300, 312–332, and 339–358; these read YKDMLMLTIMTIMLLTIVSFF, LGGALALXMSIMILLTLPFTH, FMQLTFWTFTATFLVISWTAT, and FTTISQVAALMYFLFFISNP.

Belongs to the cytochrome b family. As to quaternary structure, the cytochrome bc1 complex contains 3 respiratory subunits (MT-CYB, CYC1 and UQCRFS1), 2 core proteins (UQCRC1 and UQCRC2) and probably 6 low-molecular weight proteins. The cofactor is heme b.

The protein localises to the mitochondrion inner membrane. Component of the ubiquinol-cytochrome c reductase complex (complex III or cytochrome b-c1 complex) that is part of the mitochondrial respiratory chain. The b-c1 complex mediates electron transfer from ubiquinol to cytochrome c. Contributes to the generation of a proton gradient across the mitochondrial membrane that is then used for ATP synthesis. The chain is Cytochrome b (MT-CYB) from Chilabothrus exsul (Abaco Island boa).